The following is a 179-amino-acid chain: Large ribosomal subunit protein uL6 (179 aa).

The protein belongs to the universal ribosomal protein uL6 family. As to quaternary structure, part of the 50S ribosomal subunit.

In terms of biological role, this protein binds to the 23S rRNA, and is important in its secondary structure. It is located near the subunit interface in the base of the L7/L12 stalk, and near the tRNA binding site of the peptidyltransferase center. This chain is Large ribosomal subunit protein uL6, found in Bifidobacterium longum (strain DJO10A).